Reading from the N-terminus, the 795-residue chain is MKFSEQWVREWVNPAVSTEQLCEQITMLGLEVDGVEAVAGTFNGVVVGEVVECAQHPDADKLRVTKVNVGGDRLLDIVCGAPNCRQGLKVACATEGAVLPGDFKIKKTKLRGQPSEGMLCSFSELGIDVEADGIIELPLDAPIGTDLREYLALDDNAIEISLTPNRADCLSIAGIAREIGVVNKQLVNQLHFEAAPATISDKVQIDLQAPEACPRYLLRVIKNVNVKAPSPMWMQEKLRRCGIRSIDPIVDITNYILLEFGQPMHAFDAAKVTQPVQVRFAKEGEELVLLDGSTAKLQSNTLLIADQNGPLAMAGIFGGAASGVNSETKDVILESAFFAPLAIAGRARQYGLHTDASHRFERGVDFELARKAMERATALLLEICGGEAGEICEASSETHLPKVNTVQLRRSKLDALLGHHIETGSVTEIFHRLGFDVTYANDIWTVTSASWRFDIEIEEDLIEEVARIYGYNSIPNNAPLAHLCMREHKESDLDLARIKTALVDADYQEAITYSFVDPKIQSLLHPHQEALVLPNPISVEMSAMRVSLISGLLGAVLYNQNRQQSRVRLFETGLRFVPDANAEFGVRQEFVLSAVITGTAKSEHWAGKAESVDFFDLKGDLESVLSLTEGGHRVRFVAKQFDALHPGQSAAIELDGQEIGFIGAIHPSISQKLGLNGKTFVFEILWNAIAARNVVQAKEISKFPANRRDLALVVADSVPAGELIAACKQAGGEKLVQVNLFDVYQGVGVAEGYKSLAISLTVQDNEKTLEDEEINAVISAVLAEVKQRFNAELRD.

Positions 39–148 (AGTFNGVVVG…LDAPIGTDLR (110 aa)) constitute a tRNA-binding domain. The region spanning 401-476 (PKVNTVQLRR…RIYGYNSIPN (76 aa)) is the B5 domain. Positions 454, 460, 463, and 464 each coordinate Mg(2+). The FDX-ACB domain maps to 701 to 794 (SKFPANRRDL…VKQRFNAELR (94 aa)).

The protein belongs to the phenylalanyl-tRNA synthetase beta subunit family. Type 1 subfamily. Tetramer of two alpha and two beta subunits. The cofactor is Mg(2+).

The protein resides in the cytoplasm. It catalyses the reaction tRNA(Phe) + L-phenylalanine + ATP = L-phenylalanyl-tRNA(Phe) + AMP + diphosphate + H(+). This is Phenylalanine--tRNA ligase beta subunit (pheT) from Haemophilus influenzae (strain ATCC 51907 / DSM 11121 / KW20 / Rd).